A 404-amino-acid chain; its full sequence is MPGISASASRIKKWEMEEYDQYQHYFYDDHNLDEDFFKSTAPSEDIWKKFELVPTPPMSPVRILEGSGPSPGDRLEWVSQFLGQDDEQEGLCKLNAEETLENLSSIIIQDCMWSSFSASQQLEKVVSERLSCSAQSKLSGKAQCVPADVPALNSLATDCVDPAAVLTFPLSSSCKKQVSSGSESRTDSSDDEEIDVVTVEHKQNKSRLVNARKPVTITVRADPHDPCMKRFHISIHQQQHNYAARSPDSYPEEEPPRKKIRQEIVQPRLASTPQTPERKSPLPSPSVPAQSPTVSASPTHTSYHLKSQPSSPQSSDCEDTDKRKTHNFLERKRRNDLRSRFLALRDEIPGLVDCPKTPKVVILTKATEYLRTLHVSDRQKAQEKKQLKSKQQQLLRRLAELKRA.

Disordered stretches follow at residues 175–195 (KKQV…EEID) and 238–331 (QQHN…FLER). A compositionally biased stretch (polar residues) spans 287-315 (VPAQSPTVSASPTHTSYHLKSQPSSPQSS). Positions 321–373 (DKRKTHNFLERKRRNDLRSRFLALRDEIPGLVDCPKTPKVVILTKATEYLRTL) constitute a bHLH domain. The leucine-zipper stretch occupies residues 373–401 (LHVSDRQKAQEKKQLKSKQQQLLRRLAEL).

Efficient DNA binding requires dimerization with another bHLH protein. Binds DNA as a heterodimer with max.

The protein localises to the nucleus. The protein is Protein L-Myc-1b of Danio rerio (Zebrafish).